The primary structure comprises 442 residues: Tubulin beta chain (442 aa).

Residues Gln11, Glu69, Ser138, Gly142, Thr143, Gly144, Asn204, and Asn226 each contribute to the GTP site. Residue Glu69 participates in Mg(2+) binding. The tract at residues 421 to 442 (EYQQYQDATAEDEEEMDEEQME) is disordered. A compositionally biased stretch (acidic residues) spans 429–442 (TAEDEEEMDEEQME).

This sequence belongs to the tubulin family. As to quaternary structure, dimer of alpha and beta chains. A typical microtubule is a hollow water-filled tube with an outer diameter of 25 nm and an inner diameter of 15 nM. Alpha-beta heterodimers associate head-to-tail to form protofilaments running lengthwise along the microtubule wall with the beta-tubulin subunit facing the microtubule plus end conferring a structural polarity. Microtubules usually have 13 protofilaments but different protofilament numbers can be found in some organisms and specialized cells. Requires Mg(2+) as cofactor.

It localises to the cytoplasm. Its subcellular location is the cytoskeleton. Functionally, tubulin is the major constituent of microtubules, a cylinder consisting of laterally associated linear protofilaments composed of alpha- and beta-tubulin heterodimers. Microtubules grow by the addition of GTP-tubulin dimers to the microtubule end, where a stabilizing cap forms. Below the cap, tubulin dimers are in GDP-bound state, owing to GTPase activity of alpha-tubulin. This is Tubulin beta chain (TUBB1) from Stylonychia lemnae (Ciliate).